We begin with the raw amino-acid sequence, 583 residues long: Probable phosphoglucomutase, cytoplasmic 1 (583 aa).

Residues arginine 24 and serine 123 each coordinate alpha-D-glucose 1,6-bisphosphate. Serine 123 functions as the Phosphoserine intermediate in the catalytic mechanism. 4 residues coordinate Mg(2+): serine 123, aspartate 299, aspartate 301, and aspartate 303. Position 123 is a phosphoserine (serine 123). Alpha-D-glucose 1,6-bisphosphate is bound by residues aspartate 303, arginine 304, threonine 367, glutamate 386, serine 388, and lysine 399.

The protein belongs to the phosphohexose mutase family. Monomer. The cofactor is Mg(2+).

The protein localises to the cytoplasm. The catalysed reaction is alpha-D-glucose 1-phosphate = alpha-D-glucose 6-phosphate. The enzyme catalyses O-phospho-L-seryl-[protein] + alpha-D-glucose 1-phosphate = alpha-D-glucose 1,6-bisphosphate + L-seryl-[protein]. It catalyses the reaction alpha-D-glucose 1,6-bisphosphate + L-seryl-[protein] = O-phospho-L-seryl-[protein] + alpha-D-glucose 6-phosphate. Functionally, catalyzes the reversible isomerization of alpha-D-glucose 1-phosphate to alpha-D-glucose 6-phosphate. The mechanism proceeds via the intermediate compound alpha-D-glucose 1,6-bisphosphate. This enzyme participates in both the breakdown and synthesis of glucose. The chain is Probable phosphoglucomutase, cytoplasmic 1 from Arabidopsis thaliana (Mouse-ear cress).